Reading from the N-terminus, the 335-residue chain is CTD kinase subunit beta (335 aa).

Cyclin N-terminal domains follow at residues 26-151 (ILST…CFDF) and 158-241 (NYMV…LYMH). The disordered stretch occupies residues 269 to 293 (KNSGRPQKPPQIDPHSSSLADEYRE).

It belongs to the cyclin family. In terms of assembly, CTDK-I consists of three subunits, ctk1/lsk1, ctk2/lsc1 and ctk3 (also called alpha, beta and gamma). Interacts with ctk1/lsk1. This interaction is dependent on ctk1/lsk1 kinase activity.

The protein resides in the cytoplasm. It localises to the nucleus. Cyclin subunit of the CTDK-I complex, which hyperphosphorylates the C-terminal heptapeptide repeat domain (CTD) of the largest RNA polymerase II subunit. As part of the CTDK-I complex, involved in RNA polymerase II transcriptional elongation and pre-mRNA 3'-end processing. Together with ctk3, required for ctk1/lsk1 CTD kinase activation. Together with ctk1/lsk1, required for the regulation of cytokinesis by phosphorylating 'Ser-2' residues found in the heptad repeats of the CTD. The polypeptide is CTD kinase subunit beta (lsc1) (Schizosaccharomyces pombe (strain 972 / ATCC 24843) (Fission yeast)).